Reading from the N-terminus, the 248-residue chain is MGLSRVRAVFFDLDNTLIDTAGASRRGMLEVIKLLQSKYHYKEEAEIICDKVQVKLSKECFHPYSTCITDVRTSHWEEAIQETKGGADNRKLAEECYFLWKSTRLQHMILADDVKAMLTELRKEVRLLLLTNGDRQTQREKIEACACQSYFDAIVIGGEQKEEKPAPSIFYHCCDLLGVQPGDCVMVGDTLETDIQGGLNAGLKATVWINKSGRVPLTSSPMPHYMVSSVLELPALLQSIDCKVSMSV.

Asp-12 provides a ligand contact to Mg(2+). Phosphate is bound by residues Leu-13, Asp-14, Thr-131, Asn-132, and Lys-164. Asp-14 contributes to the Mg(2+) binding site. Asp-189 contacts Mg(2+).

Belongs to the HAD-like hydrolase superfamily. NANP family. Requires Mg(2+) as cofactor.

It catalyses the reaction N-acetylneuraminate 9-phosphate + H2O = N-acetylneuraminate + phosphate. The catalysed reaction is N-glycoloylneuraminate 9-phosphate + H2O = N-glycoloylneuraminate + phosphate. It functions in the pathway amino-sugar metabolism; N-acetylneuraminate biosynthesis. Inhibited by calcium. Inhibited by vanadate, sodium orthovanate and phosphonate. In terms of biological role, catalyzes the dephosphorylation of N-acylneuraminate 9-phosphate (Neu5Ac-9-P) to sialic acid N-acetylneuraminic acid (Neu5Ac). May also use N-glycoloylneuraminate 9-phosphate as substrate. The polypeptide is N-acylneuraminate-9-phosphatase (Mus musculus (Mouse)).